Here is a 446-residue protein sequence, read N- to C-terminus: Amino-acid acetyltransferase (446 aa).

Positions 299–438 (EQVRDAEIDD…QKLYNFQRKS (140 aa)) constitute an N-acetyltransferase domain.

This sequence belongs to the acetyltransferase family. ArgA subfamily.

Its subcellular location is the cytoplasm. It catalyses the reaction L-glutamate + acetyl-CoA = N-acetyl-L-glutamate + CoA + H(+). It functions in the pathway amino-acid biosynthesis; L-arginine biosynthesis; N(2)-acetyl-L-ornithine from L-glutamate: step 1/4. The chain is Amino-acid acetyltransferase from Aliivibrio fischeri (strain ATCC 700601 / ES114) (Vibrio fischeri).